The primary structure comprises 473 residues: Glycine--tRNA ligase (473 aa).

Substrate-binding residues include arginine 101 and glutamate 172. ATP is bound by residues 204-206, 214-219, 289-290, and 333-336; these read RNE, FRTREF, EL, and GVER. Position 219–223 (219–223) interacts with substrate; sequence FEQME. Position 329–333 (329–333) interacts with substrate; that stretch reads EPSVG.

Belongs to the class-II aminoacyl-tRNA synthetase family. Homodimer.

Its subcellular location is the cytoplasm. The catalysed reaction is tRNA(Gly) + glycine + ATP = glycyl-tRNA(Gly) + AMP + diphosphate. Functionally, catalyzes the attachment of glycine to tRNA(Gly). The sequence is that of Glycine--tRNA ligase from Ureaplasma urealyticum serovar 10 (strain ATCC 33699 / Western).